Reading from the N-terminus, the 491-residue chain is NADH-quinone oxidoreductase subunit N (491 aa).

A run of 14 helical transmembrane segments spans residues 11-31 (ATAE…TTFA), 38-58 (LAYG…YNTA), 74-94 (LLGD…LLYG), 106-126 (PEYY…VTSN), 128-148 (LLSM…LVAF), 163-183 (FVLG…LYGA), 206-226 (LLFG…VVPF), 243-263 (LIIA…LLVW), 272-292 (WQTM…LAAI), 301-321 (LAYS…SGVV), 336-356 (MFYA…IILL), 379-399 (FAAM…FIGF), 410-430 (VAAG…IGAF), and 465-485 (LAIA…TFVL).

This sequence belongs to the complex I subunit 2 family. As to quaternary structure, NDH-1 is composed of 14 different subunits. Subunits NuoA, H, J, K, L, M, N constitute the membrane sector of the complex.

The protein localises to the cell inner membrane. The catalysed reaction is a quinone + NADH + 5 H(+)(in) = a quinol + NAD(+) + 4 H(+)(out). In terms of biological role, NDH-1 shuttles electrons from NADH, via FMN and iron-sulfur (Fe-S) centers, to quinones in the respiratory chain. The immediate electron acceptor for the enzyme in this species is believed to be ubiquinone. Couples the redox reaction to proton translocation (for every two electrons transferred, four hydrogen ions are translocated across the cytoplasmic membrane), and thus conserves the redox energy in a proton gradient. The polypeptide is NADH-quinone oxidoreductase subunit N (Azoarcus sp. (strain BH72)).